The following is a 498-amino-acid chain: RuvB-like helicase 2 (498 aa).

Residue G79 to T86 participates in ATP binding. The interval V458–D498 is disordered. The span at G461–Q489 shows a compositional bias: polar residues.

This sequence belongs to the RuvB family. In terms of assembly, may form heterododecamers with RVB1. Component of the SWR1 chromatin remodeling complex, the INO80 chromatin remodeling complex, and of the R2TP complex.

The protein resides in the nucleus. The enzyme catalyses ATP + H2O = ADP + phosphate + H(+). In terms of biological role, DNA helicase which participates in several chromatin remodeling complexes, including the SWR1 and the INO80 complexes. The SWR1 complex mediates the ATP-dependent exchange of histone H2A for the H2A variant HZT1 leading to transcriptional regulation of selected genes by chromatin remodeling. The INO80 complex remodels chromatin by shifting nucleosomes and is involved in DNA repair. Also involved in pre-rRNA processing. The protein is RuvB-like helicase 2 (RVB2) of Candida albicans (strain SC5314 / ATCC MYA-2876) (Yeast).